Reading from the N-terminus, the 319-residue chain is Annexin A5 (319 aa).

Alanine 2 carries the post-translational modification N-acetylalanine. 4 Annexin repeats span residues 13 to 84 (FDGR…ALMK), 85 to 156 (PSRL…VLLQ), 168 to 240 (AQVE…AVVK), and 244 to 315 (SIPA…LLCG). Lysine 27 participates in a covalent cross-link: Glycyl lysine isopeptide (Lys-Gly) (interchain with G-Cter in SUMO1); alternate. Lysine 27 participates in a covalent cross-link: Glycyl lysine isopeptide (Lys-Gly) (interchain with G-Cter in SUMO2); alternate. Residue serine 35 is modified to Phosphoserine. 5 positions are modified to N6-acetyllysine: lysine 68, lysine 74, lysine 77, lysine 95, and lysine 99. Lysine 288 bears the N6-succinyllysine mark. Positions 312-318 (LLCGGED) match the [IL]-x-C-x-x-[DE] motif motif.

Belongs to the annexin family. In terms of assembly, monomer. Binds ATRX, EIF5B and DNMT1. S-nitrosylation is induced by interferon-gamma and oxidatively-modified low-densitity lipoprotein (LDL(ox)) possibly implicating the iNOS-S100A8/9 transnitrosylase complex.

Its function is as follows. This protein is an anticoagulant protein that acts as an indirect inhibitor of the thromboplastin-specific complex, which is involved in the blood coagulation cascade. The polypeptide is Annexin A5 (Anxa5) (Rattus norvegicus (Rat)).